The sequence spans 287 residues: Aquaporin PIP1-2 (287 aa).

Residues 1-37 form a disordered region; the sequence is MEGKEEDVRLGANKFTERQPIGTAAQSQDKDYKEPPP. Residues 1-55 are Cytoplasmic-facing; the sequence is MEGKEEDVRLGANKFTERQPIGTAAQSQDKDYKEPPPAPLFEPGELSSWSFYRAG. The helical transmembrane segment at 56–76 threads the bilayer; that stretch reads IAEFVATFLFLYITILTVMGV. The Extracellular segment spans residues 77–89; that stretch reads VKSSTKCSTVGIQ. The chain crosses the membrane as a helical span at residues 90–110; the sequence is GIAWAFGGMIFALVYCTAGIS. Residues 111 to 133 lie on the Cytoplasmic side of the membrane; it reads GGHINPAVTFGLFLARKLSLTRA. The NPA 1 signature appears at 115 to 117; the sequence is NPA. The helical transmembrane segment at 134-154 threads the bilayer; the sequence is LFYMVMQCLGAICGAGVVKGF. Over 155–175 the chain is Extracellular; sequence QKGLYENNGGGANVVAPGYTK. Residues 176–196 form a helical membrane-spanning segment; sequence GDGLGAEIVGTFILVYTVFSA. Residues 197–209 lie on the Cytoplasmic side of the membrane; it reads TDAKRSARDSHVP. A helical transmembrane segment spans residues 210–230; it reads ILAPLPIGFAVFLVHLATIPI. The Extracellular segment spans residues 231–257; it reads TGTGINPARSLGAAIIYNKGHAWDDHW. Residues 236 to 238 carry the NPA 2 motif; sequence NPA. The chain crosses the membrane as a helical span at residues 258 to 278; that stretch reads IFWVGPFIGAALAALYHQVVI. Residues 279 to 287 lie on the Cytoplasmic side of the membrane; sequence RAIPFKSRS.

This sequence belongs to the MIP/aquaporin (TC 1.A.8) family. PIP (TC 1.A.8.11) subfamily. As to expression, barely detectable in roots, leaves and fruits.

The protein localises to the cell membrane. Water channel required to facilitate the transport of water across cell membrane; mercury-insensitive. Contributes to the tolerance to multiple abiotic stresses including salt (NaCl), cold and water deprivation, by modulating cytosolic K(+)/Na(+) ratio, maintaining osmotic balance, and reducing membrane injury (e.g. oxidative injury). The chain is Aquaporin PIP1-2 from Musa acuminata subsp. malaccensis (Wild banana).